The chain runs to 162 residues: Onchocystatin (162 aa).

Positions 1-32 (MLTIKDGTLLIHLLLFSVVALVQLQGAKSARA) are cleaved as a signal peptide. Residues 30-54 (ARAKNPSKMESKTGENQDRPVLLGG) are disordered. Residues 36–47 (SKMESKTGENQD) show a composition bias toward basic and acidic residues. The short motif at 97 to 101 (QVVAG) is the Secondary area of contact element. A disulfide bridge links Cys115 with Cys128.

Belongs to the cystatin family. As to expression, expressed in the cuticle of L3 and L4 larvae, female adult, and in the eggshell of developing microfilariae.

Its function is as follows. Cysteine protease inhibitor which inhibits members of the peptidase C1 family. In the human host, inhibits CTSL/cathepsin L and CTSS/cathepsin S and to a lesser extent CTSB/cathepsin B which may cause defects in antigen processing and thereby impair antigen-driven T cell proliferation. The chain is Onchocystatin from Onchocerca volvulus.